The following is a 160-amino-acid chain: Myosin regulatory light chain, smooth muscle (160 aa).

The residue at position 1 (Ser-1) is a Blocked amino end (Ser). Phosphoserine is present on Ser-11. EF-hand domains are found at residues 20-55 and 88-123; these read NQIQ…LGTA and DPEE…MGDN. Asp-33, Asn-35, Asp-37, and Asp-44 together coordinate Ca(2+).

Its function is as follows. In molluscan muscle, calcium regulation is associated with myosin rather than with actin. Muscle myosin contains two types of light chains: the catalytic light chain, essential for ATPase activity, and the regulatory light chain, a calcium-binding protein responsible for Ca(2+) dependent binding and Ca(2+) dependent Mg-ATPase activity. The chain is Myosin regulatory light chain, smooth muscle from Spisula sachalinensis (Sakhalin surf-clam).